The sequence spans 1051 residues: Ubiquitin-activating enzyme E1 2 (1051 aa).

A compositionally biased stretch (basic and acidic residues) spans 1–32 (MLPRKREIVAGEVEDLQKKTRAGEGEATREEG). A disordered region spans residues 1 to 42 (MLPRKREIVAGEVEDLQKKTRAGEGEATREEGDAAMAGRGNE). 2 repeat units span residues 56–194 (GRET…GSVF) and 453–605 (GSTL…QMVI). The 2 approximate repeats stretch occupies residues 56–605 (GRETMKPLFG…GAKCNTQMVI (550 aa)). Residues Ala-472, Asp-498, Arg-509, Lys-522, and 570 to 571 (DN) each bind ATP. Cys-626 functions as the Glycyl thioester intermediate in the catalytic mechanism.

This sequence belongs to the ubiquitin-activating E1 family. As to quaternary structure, monomer.

It catalyses the reaction ATP + ubiquitin + [E1 ubiquitin-activating enzyme]-L-cysteine = AMP + diphosphate + S-ubiquitinyl-[E1 ubiquitin-activating enzyme]-L-cysteine.. The protein operates within protein modification; protein ubiquitination. Functionally, activates ubiquitin by first adenylating its C-terminal glycine residue with ATP, and thereafter linking this residue to the side chain of a cysteine residue in E1, yielding a ubiquitin-E1 thioester and free AMP. This is Ubiquitin-activating enzyme E1 2 (UBA2) from Triticum aestivum (Wheat).